Reading from the N-terminus, the 126-residue chain is Fluoride-specific ion channel FluC (126 aa).

4 helical membrane-spanning segments follow: residues 9–29, 35–55, 63–83, and 94–114; these read LAVFAGGAIGSVLRELLGFQL, LTATFGINIAACFLLGWLYAI, LLHLGAVGFCGGLSTFSSFVL, and WSIGLTAMTLEIAAGLAAAIL. Residues glycine 73 and serine 76 each coordinate Na(+).

It belongs to the fluoride channel Fluc/FEX (TC 1.A.43) family.

The protein localises to the cell inner membrane. It carries out the reaction fluoride(in) = fluoride(out). With respect to regulation, na(+) is not transported, but it plays an essential structural role and its presence is essential for fluoride channel function. Fluoride-specific ion channel. Important for reducing fluoride concentration in the cell, thus reducing its toxicity. The chain is Fluoride-specific ion channel FluC from Ruegeria pomeroyi (strain ATCC 700808 / DSM 15171 / DSS-3) (Silicibacter pomeroyi).